Reading from the N-terminus, the 502-residue chain is ATP synthase subunit alpha 1/3 (502 aa).

169-176 (GDRQTGKT) contacts ATP.

The protein belongs to the ATPase alpha/beta chains family. In terms of assembly, F-type ATPases have 2 components, CF(1) - the catalytic core - and CF(0) - the membrane proton channel. CF(1) has five subunits: alpha(3), beta(3), gamma(1), delta(1), epsilon(1). CF(0) has three main subunits: a(1), b(2) and c(9-12). The alpha and beta chains form an alternating ring which encloses part of the gamma chain. CF(1) is attached to CF(0) by a central stalk formed by the gamma and epsilon chains, while a peripheral stalk is formed by the delta and b chains.

The protein resides in the cell inner membrane. The catalysed reaction is ATP + H2O + 4 H(+)(in) = ADP + phosphate + 5 H(+)(out). Its function is as follows. Produces ATP from ADP in the presence of a proton gradient across the membrane. The alpha chain is a regulatory subunit. In Syntrophotalea carbinolica (strain DSM 2380 / NBRC 103641 / GraBd1) (Pelobacter carbinolicus), this protein is ATP synthase subunit alpha 1/3.